Here is a 290-residue protein sequence, read N- to C-terminus: RxLR effector protein Avr4 (290 aa).

Positions 1–24 (MRSLHILLVITASLLASLAVSAEA) are cleaved as a signal peptide. Residues 33–56 (VVENNKDKSRFLRDGGTTEAQTDE) form a disordered region. Residues 36–45 (NNKDKSRFLR) are compositionally biased toward basic and acidic residues. The short motif at 42–58 (RFLRDGGTTEAQTDEER) is the RxLR-dEER element. Residues 118–141 (KYERMQWQKLNEGQTLTYMRVGDR) are W1 motif. The W2 motif stretch occupies residues 151–174 (QLLRWVAQKKTVKSVYDDLQIEGF). The interval 224–247 (VFEKWAMEGTHIKSVIKTLNLNNK) is W3 motif. The N-linked (GlcNAc...) asparagine glycan is linked to Asn-246. A y motif region spans residues 249–270 (ASEMANNENFPALLKYVKLYLD).

Belongs to the RxLR effector family.

It is found in the secreted. It localises to the host cytoplasm. Its subcellular location is the host nucleus. The protein resides in the host nucleolus. The protein localises to the host cytoskeleton. Its function is as follows. Secreted effector that acts as an elicitor of hypersensitive response (HR) specifically on plants carrying defense protein R4, through its interaction with this protein. The polypeptide is RxLR effector protein Avr4 (Phytophthora mirabilis).